A 307-amino-acid polypeptide reads, in one-letter code: Porphobilinogen deaminase (307 aa).

S-(dipyrrolylmethanemethyl)cysteine is present on Cys241.

The protein belongs to the HMBS family. As to quaternary structure, monomer. Requires dipyrromethane as cofactor.

It carries out the reaction 4 porphobilinogen + H2O = hydroxymethylbilane + 4 NH4(+). It functions in the pathway porphyrin-containing compound metabolism; protoporphyrin-IX biosynthesis; coproporphyrinogen-III from 5-aminolevulinate: step 2/4. Tetrapolymerization of the monopyrrole PBG into the hydroxymethylbilane pre-uroporphyrinogen in several discrete steps. This Macrococcus caseolyticus (strain JCSC5402) (Macrococcoides caseolyticum) protein is Porphobilinogen deaminase.